The chain runs to 367 residues: uncharacterized protein (367 aa).

Residues 1-96 (ITLHRLAELV…LTATLQLQPV (96 aa)) enclose the FAD-binding PCMH-type domain.

This sequence to M.tuberculosis Rv3790.

This is an uncharacterized protein from Streptomyces coelicolor.